The primary structure comprises 1366 residues: DNA-directed RNA polymerase subunit beta' (1366 aa).

The span at 1–23 shows a compositional bias: basic residues; that stretch reads MTSSKPKKSSRVRKTTKNSKKNH. A disordered region spans residues 1 to 37; the sequence is MTSSKPKKSSRVRKTTKNSKKNHNTMMPLLPKTPPSF. Positions 248, 315, 322, and 325 each coordinate Zn(2+). The tract at residues 1304-1366 is disordered; the sequence is TAILDDPSDE…LQEEGLLSDG (63 aa). The span at 1354 to 1366 shows a compositional bias: low complexity; it reads LEGLQEEGLLSDG.

Belongs to the RNA polymerase beta' chain family. RpoC2 subfamily. In terms of assembly, in cyanobacteria the RNAP catalytic core is composed of 2 alpha, 1 beta, 1 beta', 1 gamma and 1 omega subunit. When a sigma factor is associated with the core the holoenzyme is formed, which can initiate transcription. Zn(2+) serves as cofactor.

The enzyme catalyses RNA(n) + a ribonucleoside 5'-triphosphate = RNA(n+1) + diphosphate. DNA-dependent RNA polymerase catalyzes the transcription of DNA into RNA using the four ribonucleoside triphosphates as substrates. This is DNA-directed RNA polymerase subunit beta' from Prochlorococcus marinus subsp. pastoris (strain CCMP1986 / NIES-2087 / MED4).